We begin with the raw amino-acid sequence, 253 residues long: Hydroxyacylglutathione hydrolase (253 aa).

Zn(2+) contacts are provided by His59, His61, Asp63, His64, His118, Asp143, and His181.

This sequence belongs to the metallo-beta-lactamase superfamily. Glyoxalase II family. As to quaternary structure, monomer. Zn(2+) is required as a cofactor.

It catalyses the reaction an S-(2-hydroxyacyl)glutathione + H2O = a 2-hydroxy carboxylate + glutathione + H(+). Its pathway is secondary metabolite metabolism; methylglyoxal degradation; (R)-lactate from methylglyoxal: step 2/2. Its function is as follows. Thiolesterase that catalyzes the hydrolysis of S-D-lactoyl-glutathione to form glutathione and D-lactic acid. This is Hydroxyacylglutathione hydrolase from Prochlorococcus marinus (strain MIT 9211).